The sequence spans 397 residues: S-adenosylmethionine synthase (397 aa).

H16 contributes to the ATP binding site. D18 provides a ligand contact to Mg(2+). E44 serves as a coordination point for K(+). Residues E57 and Q100 each contribute to the L-methionine site. The flexible loop stretch occupies residues Q100 to E110. Residues D175 to K177, R242 to F243, D251, R257 to K258, A274, and K278 contribute to the ATP site. Residue D251 coordinates L-methionine. K282 is a binding site for L-methionine.

It belongs to the AdoMet synthase family. In terms of assembly, homotetramer; dimer of dimers. Mg(2+) is required as a cofactor. Requires K(+) as cofactor.

The protein localises to the cytoplasm. It catalyses the reaction L-methionine + ATP + H2O = S-adenosyl-L-methionine + phosphate + diphosphate. The protein operates within amino-acid biosynthesis; S-adenosyl-L-methionine biosynthesis; S-adenosyl-L-methionine from L-methionine: step 1/1. Functionally, catalyzes the formation of S-adenosylmethionine (AdoMet) from methionine and ATP. The overall synthetic reaction is composed of two sequential steps, AdoMet formation and the subsequent tripolyphosphate hydrolysis which occurs prior to release of AdoMet from the enzyme. The chain is S-adenosylmethionine synthase from Streptococcus thermophilus (strain ATCC BAA-250 / LMG 18311).